A 230-amino-acid polypeptide reads, in one-letter code: Large ribosomal subunit protein uL1 (230 aa).

The protein belongs to the universal ribosomal protein uL1 family. Part of the 50S ribosomal subunit.

Binds directly to 23S rRNA. The L1 stalk is quite mobile in the ribosome, and is involved in E site tRNA release. Its function is as follows. Protein L1 is also a translational repressor protein, it controls the translation of the L11 operon by binding to its mRNA. The protein is Large ribosomal subunit protein uL1 of Limosilactobacillus fermentum (strain NBRC 3956 / LMG 18251) (Lactobacillus fermentum).